Consider the following 546-residue polypeptide: Nuclear rim protein 1 (546 aa).

Composition is skewed to basic and acidic residues over residues 1–10 (MAFWRNRHES) and 25–35 (QNSEDIREDNN). A disordered region spans residues 1-35 (MAFWRNRHESPAISQERSPSPDRFQNSEDIREDNN). Helical transmembrane passes span 155–175 (FYLLTVLLLITNISVTYRYLF) and 249–269 (FLTSFFVSFSPIAFCFLWMTD). Disordered stretches follow at residues 405–441 (YPSRQHSPRLSPSRYSHLQSGNTPSAPSTPLLIPSQQ) and 505–546 (RQGY…SPFR). Over residues 406–441 (PSRQHSPRLSPSRYSHLQSGNTPSAPSTPLLIPSQQ) the composition is skewed to polar residues. A compositionally biased stretch (low complexity) spans 533-546 (SKSPFRNSSSSPFR).

Belongs to the NUR1 family.

The protein resides in the nucleus membrane. Its function is as follows. Member of a perinuclear network that controls recombination at multiple loci to maintain genome stability. Required for rDNA repeat stability. This chain is Nuclear rim protein 1 (NUR1), found in Kluyveromyces lactis (strain ATCC 8585 / CBS 2359 / DSM 70799 / NBRC 1267 / NRRL Y-1140 / WM37) (Yeast).